We begin with the raw amino-acid sequence, 97 residues long: Na(+)/H(+) antiporter subunit F1 (97 aa).

A run of 3 helical transmembrane segments spans residues 3–23 (FKIF…AMLI), 35–55 (VVAL…FSIL), and 60–80 (YMLV…AVFS).

This sequence belongs to the CPA3 antiporters (TC 2.A.63) subunit F family. In terms of assembly, may form a heterooligomeric complex that consists of seven subunits: mnhA1, mnhB1, mnhC1, mnhD1, mnhE1, mnhF1 and mnhG1.

The protein resides in the cell membrane. Functionally, mnh complex is a Na(+)/H(+) antiporter involved in Na(+) excretion. This Staphylococcus epidermidis (strain ATCC 35984 / DSM 28319 / BCRC 17069 / CCUG 31568 / BM 3577 / RP62A) protein is Na(+)/H(+) antiporter subunit F1 (mnhF1).